We begin with the raw amino-acid sequence, 316 residues long: Probable cell division protein WhiA (316 aa).

Positions 275 to 309 (TLKELGEMVSGGKISKSGINHRLRKIDEIAEKLRA) form a DNA-binding region, H-T-H motif.

It belongs to the WhiA family.

In terms of biological role, involved in cell division and chromosome segregation. The protein is Probable cell division protein WhiA of Bacillus cytotoxicus (strain DSM 22905 / CIP 110041 / 391-98 / NVH 391-98).